The primary structure comprises 228 residues: Phosphoglycolate phosphatase (228 aa).

The Nucleophile role is filled by D9. 2 residues coordinate Mg(2+): D9 and D11. A substrate-binding site is contributed by K151. Mg(2+) contacts are provided by D174 and D178.

Belongs to the archaeal SPP-like hydrolase family. Mg(2+) serves as cofactor.

It carries out the reaction 2-phosphoglycolate + H2O = glycolate + phosphate. Functionally, catalyzes the dephosphorylation of 2-phosphoglycolate. The polypeptide is Phosphoglycolate phosphatase (Pyrobaculum neutrophilum (strain DSM 2338 / JCM 9278 / NBRC 100436 / V24Sta) (Thermoproteus neutrophilus)).